Here is a 585-residue protein sequence, read N- to C-terminus: Formate--tetrahydrofolate ligase (585 aa).

65-72 is an ATP binding site; the sequence is TPHGEGKT.

The protein belongs to the formate--tetrahydrofolate ligase family.

It carries out the reaction (6S)-5,6,7,8-tetrahydrofolate + formate + ATP = (6R)-10-formyltetrahydrofolate + ADP + phosphate. The protein operates within one-carbon metabolism; tetrahydrofolate interconversion. This is Formate--tetrahydrofolate ligase from Shewanella baltica (strain OS195).